The sequence spans 1765 residues: Sodium channel protein type 11 subunit alpha (1765 aa).

Over 1–126 the chain is Cytoplasmic; that stretch reads MEERYYPVIF…PIRSFMIRIS (126 aa). One copy of the I repeat lies at 115 to 406; the sequence is FNPIRSFMIR…VTMAYEEQNR (292 aa). The chain crosses the membrane as a helical span at residues 127-148; sequence VHSVFSMFIICTVIINCMFMAN. N149 carries N-linked (GlcNAc...) asparagine glycosylation. Topologically, residues 149–159 are extracellular; the sequence is NSSVDSRPSSN. Residues 160 to 179 form a helical membrane-spanning segment; it reads IPEYVFIGIYVLEAVIKILA. Over 180 to 191 the chain is Cytoplasmic; it reads RGFIVDEFSYLR. A helical membrane pass occupies residues 192–211; that stretch reads DPWNWLDFIVIGTAIAPCFL. The Extracellular segment spans residues 212-219; it reads GNKVNNLS. N-linked (GlcNAc...) asparagine glycosylation is present at N217. A helical; Voltage-sensor membrane pass occupies residues 220–239; it reads TLRTFRVLRALKAISVISGL. Over 240–255 the chain is Cytoplasmic; it reads KVIVGALLRSVKKLVD. Residues 256–269 form a helical membrane-spanning segment; sequence VMVLTLFCLSIFAL. Over 270-342 the chain is Extracellular; the sequence is VGQQLFMGIL…PDYNYTNFDS (73 aa). C283 and C320 are joined by a disulfide. Residues N303, N327, and N336 are each glycosylated (N-linked (GlcNAc...) asparagine). Positions 343-367 form an intramembrane region, pore-forming; it reads FGWSFLAMFRVMTQDSWEKLYRQIL. At 368–374 the chain is on the extracellular side; it reads RTSGIYF. Residues 375-400 form a helical membrane-spanning segment; sequence VFFFVVVIFLGSFYLLNLTLAVVTMA. Over 401 to 570 the chain is Cytoplasmic; it reads YEEQNRNVAA…WLCIKKVLQT (170 aa). The tract at residues 470 to 490 is disordered; the sequence is RGSKTARASASDSEDDASKNP. An II repeat occupies 557 to 821; that stretch reads CSPPWLCIKK…EGETRKTKVQ (265 aa). A helical transmembrane segment spans residues 571–594; the sequence is IMTDPFTELAITICIIVNTVFLAM. Topologically, residues 595-605 are extracellular; the sequence is EHHNMDNSLKD. Residues 606-629 form a helical membrane-spanning segment; it reads ILKIGNWVFTGIFIAEMCLKIIAL. Residues 630 to 637 are Cytoplasmic-facing; it reads DPYHYFRH. A helical membrane pass occupies residues 638–659; it reads GWNIFDSIVALVSLADVLFHKL. At 660–664 the chain is on the extracellular side; sequence SKNLS. A glycan (N-linked (GlcNAc...) asparagine) is linked at N662. Residues 665-684 traverse the membrane as a helical; Voltage-sensor segment; sequence FLASLRVLRVFKLAKSWPTL. The Cytoplasmic portion of the chain corresponds to 685-699; it reads NTLIKIIGHSVGALG. A helical transmembrane segment spans residues 700–722; it reads NLTVVLTIVVFIFSVVGMRLFGA. The Extracellular portion of the chain corresponds to 723–742; sequence KFNKTCSTSPESLRRWHMGD. A glycan (N-linked (GlcNAc...) asparagine) is linked at N725. An intramembrane region (pore-forming) is located at residues 743–763; that stretch reads FYHSFLVVFRILCGEWIENMW. Residues 764 to 773 are Extracellular-facing; it reads ECMQEMEGSP. The cysteines at positions 765 and 775 are disulfide-linked. The helical transmembrane segment at 774 to 799 threads the bilayer; it reads LCVIVFVLIMVVGKLVVLNLFIALLL. Residues 800 to 1030 are Cytoplasmic-facing; sequence NSFSNEEKDG…WWNLRKTCYQ (231 aa). The interval 850–869 is disordered; it reads NSPKPNEATESFAGESRDTA. An III repeat occupies 1023–1320; that stretch reads NLRKTCYQIV…KKYYNAMKKL (298 aa). A helical transmembrane segment spans residues 1031-1053; it reads IVKHSWFESFIIFVILLSSGALI. The Extracellular portion of the chain corresponds to 1054–1067; the sequence is FEDVNLPSRPQVEK. A helical transmembrane segment spans residues 1068–1093; that stretch reads LLKCTDNIFTFIFLLEMILKWVAFGF. The Cytoplasmic segment spans residues 1094 to 1099; the sequence is RKYFTS. A helical transmembrane segment spans residues 1100-1117; sequence AWCWLDFLIVVVSGLSLT. Position 1118 (N1118) is a topological domain, extracellular. The chain crosses the membrane as a helical; Voltage-sensor span at residues 1119–1140; the sequence is LPNLKSFRNLRALRPLRALSQF. Residues 1141–1159 lie on the Cytoplasmic side of the membrane; that stretch reads EGMKVVVNALMSAIPAILN. A helical transmembrane segment spans residues 1160-1181; the sequence is VLLVCLIFWLIFCILGVNFFSG. At 1182–1224 the chain is on the extracellular side; the sequence is KFGRCINGTDINKYFNASNVPNQSQCLVSNYTWKVPNVNFDNV. Residues N1188, N1197, N1203, and N1211 are each glycosylated (N-linked (GlcNAc...) asparagine). An intramembrane region (pore-forming) is located at residues 1225-1246; that stretch reads GNAYLALLQVATYKGWLDIMNA. Over 1247–1262 the chain is Extracellular; it reads AVDSRGKDEQPAFEAN. Residues 1263–1289 traverse the membrane as a helical segment; sequence LYAYLYFVVFIIFGSFFTLNLFIGVII. Over 1290 to 1342 the chain is Cytoplasmic; the sequence is DNFNQQQKKLGGQDIFMTEEQKKYYNAMKKLGTKKPQKPIPRPLNKCQAFVFD. One copy of the IV repeat lies at 1329-1619; that stretch reads IPRPLNKCQA…WEKFDPEATQ (291 aa). Residues 1343–1366 traverse the membrane as a helical segment; sequence LVTSQVFDVIILGLIVTNMIIMMA. Topologically, residues 1367–1377 are extracellular; sequence ESEGQPNEVKK. The chain crosses the membrane as a helical span at residues 1378–1401; sequence IFDILNIVFVVIFTVECLIKVFAL. The Cytoplasmic segment spans residues 1402 to 1407; it reads RQHYFT. Residues 1408 to 1431 traverse the membrane as a helical segment; that stretch reads NGWNLFDCVVVVLSIISTLVSGLE. Over 1432–1440 the chain is Extracellular; sequence NSNVFPPTL. Residues 1441-1463 form a helical; Voltage-sensor membrane-spanning segment; it reads FRIVRLARIGRILRLVRAARGIR. Residues 1464–1478 are Cytoplasmic-facing; sequence TLLFALMMSLPSLFN. Residues 1479–1501 form a helical membrane-spanning segment; sequence IGLLLFLVMFIYAIFGMNWFSKV. Residues 1502–1515 are Extracellular-facing; sequence KRGSGIDDIFNFDT. The pore-forming intramembrane region spans 1516 to 1538; the sequence is FSGSMLCLFQITTSAGWDALLNP. Residues 1539 to 1559 are Extracellular-facing; that stretch reads MLESKASCNSSSQESCQQPQI. A helical membrane pass occupies residues 1560 to 1584; that stretch reads AIVYFVSYIIISFLIVVNMYIAVIL. At 1585-1765 the chain is on the cytoplasmic side; it reads ENFNTATEES…DVPKIKVHCD (181 aa).

The protein belongs to the sodium channel (TC 1.A.1.10) family. Nav1.9/SCN11A subfamily. As to quaternary structure, the voltage-resistant sodium channel consists of an ion conducting pore forming alpha-subunit regulated by one or more auxiliary subunits SCN1B, SCN2B and SCN3B. As to expression, expressed in the dorsal root ganglia (C-fiber neurons), spinal cord, trigeminal ganglia, testis, ovary, uterus and small intestine.

It is found in the cell membrane. It catalyses the reaction Na(+)(in) = Na(+)(out). Functionally, sodium channel mediating the voltage-dependent sodium ion permeability of excitable membranes. Assuming opened or closed conformations in response to the voltage difference across the membrane, the protein forms a sodium-selective channel through which sodium ions may pass in accordance with their electrochemical gradient. Involved in membrane depolarization during action potential in nociceptors which function as key relay stations for the electrical transmission of pain signals from the periphery to the central nervous system. Also involved in rapid BDNF-evoked neuronal depolarization. In Mus musculus (Mouse), this protein is Sodium channel protein type 11 subunit alpha.